Reading from the N-terminus, the 466-residue chain is 3-isopropylmalate dehydratase large subunit (466 aa).

Cys-347, Cys-407, and Cys-410 together coordinate [4Fe-4S] cluster.

This sequence belongs to the aconitase/IPM isomerase family. LeuC type 1 subfamily. Heterodimer of LeuC and LeuD. [4Fe-4S] cluster serves as cofactor.

It carries out the reaction (2R,3S)-3-isopropylmalate = (2S)-2-isopropylmalate. The protein operates within amino-acid biosynthesis; L-leucine biosynthesis; L-leucine from 3-methyl-2-oxobutanoate: step 2/4. Catalyzes the isomerization between 2-isopropylmalate and 3-isopropylmalate, via the formation of 2-isopropylmaleate. This Shewanella piezotolerans (strain WP3 / JCM 13877) protein is 3-isopropylmalate dehydratase large subunit.